Consider the following 63-residue polypeptide: Large ribosomal subunit protein bL35 (63 aa).

It belongs to the bacterial ribosomal protein bL35 family.

This chain is Large ribosomal subunit protein bL35, found in Campylobacter jejuni (strain RM1221).